We begin with the raw amino-acid sequence, 129 residues long: Putative membrane protein insertion efficiency factor (129 aa).

Belongs to the UPF0161 family.

Its subcellular location is the cell inner membrane. In terms of biological role, could be involved in insertion of integral membrane proteins into the membrane. In Rhodopseudomonas palustris (strain TIE-1), this protein is Putative membrane protein insertion efficiency factor.